The sequence spans 194 residues: Glycerol-3-phosphate acyltransferase (194 aa).

Transmembrane regions (helical) follow at residues 4-24, 80-100, 112-132, 137-157, and 161-181; these read ELIL…LLLA, WVAA…FLGF, VFLG…IGIV, YISL…AAVE, and LLVG…RENI.

Belongs to the PlsY family. In terms of assembly, probably interacts with PlsX.

The protein resides in the cell inner membrane. The enzyme catalyses an acyl phosphate + sn-glycerol 3-phosphate = a 1-acyl-sn-glycero-3-phosphate + phosphate. The protein operates within lipid metabolism; phospholipid metabolism. Its function is as follows. Catalyzes the transfer of an acyl group from acyl-phosphate (acyl-PO(4)) to glycerol-3-phosphate (G3P) to form lysophosphatidic acid (LPA). This enzyme utilizes acyl-phosphate as fatty acyl donor, but not acyl-CoA or acyl-ACP. The protein is Glycerol-3-phosphate acyltransferase of Geobacter sulfurreducens (strain ATCC 51573 / DSM 12127 / PCA).